Consider the following 474-residue polypeptide: UDP-glycosyltransferase 71C2 (474 aa).

Residues Ser293, 352–354, 369–377, and 391–394 contribute to the UDP-alpha-D-glucose site; these read APQ, HCGWNSILE, and YAEQ.

This sequence belongs to the UDP-glycosyltransferase family.

Possesses low quercetin 3-O-glucosyltransferase, 7-O-glucosyltransferase and 3'-O-glucosyltransferase activities in vitro. Glucosylates other secondary metabolites in vitro like vanillin, trans-resveratrol, curumin and etoposide. The sequence is that of UDP-glycosyltransferase 71C2 (UGT71C2) from Arabidopsis thaliana (Mouse-ear cress).